The following is a 431-amino-acid chain: Chaperone SurA (431 aa).

A signal peptide spans 1 to 20; sequence MKLTVVTFALLAFISFNTFA. PpiC domains are found at residues 171 to 272 and 281 to 381; these read QAEY…KIID and VAEL…QLMD.

It localises to the periplasm. The enzyme catalyses [protein]-peptidylproline (omega=180) = [protein]-peptidylproline (omega=0). In terms of biological role, chaperone involved in the correct folding and assembly of outer membrane proteins. Recognizes specific patterns of aromatic residues and the orientation of their side chains, which are found more frequently in integral outer membrane proteins. May act in both early periplasmic and late outer membrane-associated steps of protein maturation. The protein is Chaperone SurA of Pseudoalteromonas atlantica (strain T6c / ATCC BAA-1087).